A 134-amino-acid polypeptide reads, in one-letter code: Arsenate reductase 1 (134 aa).

Residues cysteine 11, cysteine 83, and cysteine 90 each act as nucleophile in the active site. Intrachain disulfides connect cysteine 11-cysteine 83 and cysteine 83-cysteine 90.

The protein belongs to the low molecular weight phosphotyrosine protein phosphatase family. Thioredoxin-coupled ArsC subfamily.

It localises to the cytoplasm. The catalysed reaction is arsenate + [thioredoxin]-dithiol + H(+) = arsenite + [thioredoxin]-disulfide + H2O. In terms of biological role, catalyzes the reduction of arsenate [As(V)] to arsenite [As(III)]. This chain is Arsenate reductase 1, found in Bacillus cereus (strain ATCC 10987 / NRS 248).